The following is a 149-amino-acid chain: Histidine-containing phosphotransfer protein 2 (149 aa).

An HPt domain is found at 39 to 144 (TPGFVSEVVT…LQLEQQIQAY (106 aa)). Phosphohistidine is present on His-80.

Post-translationally, two-component system major event consists of a His-to-Asp phosphorelay between a sensor histidine kinase (HK) and a response regulator (RR). In plants, the His-to-Asp phosphorelay involves an additional intermediate named Histidine-containing phosphotransfer protein (HPt). This multistep phosphorelay consists of a His-Asp-His-Asp sequential transfer of a phosphate group between first a His and an Asp of the HK protein, followed by the transfer to a conserved His of the HPt protein and finally the transfer to an Asp in the receiver domain of the RR protein. As to expression, widely expressed.

The protein localises to the cytoplasm. The protein resides in the cytosol. Its subcellular location is the nucleus. Functions as a two-component phosphorelay mediators between cytokinin sensor histidine kinases and response regulators (B-type ARRs). Plays an important role in propagating cytokinin signal transduction through the multistep His-to-Asp phosphorelay. Functions as a positive regulator of the cytokinin signaling pathway. May play a regulatory role in salt and drought tolerance during plant development. The sequence is that of Histidine-containing phosphotransfer protein 2 from Oryza sativa subsp. japonica (Rice).